The following is a 456-amino-acid chain: Bifunctional protein GlmU (456 aa).

Positions Met1–Arg229 are pyrophosphorylase. Residues Leu11–Gly14, Lys25, Gln76, Gly81–Thr82, Tyr103–Asp105, Gly140, Glu154, Asn169, and Asn227 each bind UDP-N-acetyl-alpha-D-glucosamine. Asp105 provides a ligand contact to Mg(2+). Residue Asn227 participates in Mg(2+) binding. The linker stretch occupies residues Leu230 to Ala250. An N-acetyltransferase region spans residues Gly251–Lys456. UDP-N-acetyl-alpha-D-glucosamine contacts are provided by Arg333 and Lys351. The active-site Proton acceptor is the His363. Residues Tyr366 and Asn377 each contribute to the UDP-N-acetyl-alpha-D-glucosamine site. Acetyl-CoA-binding positions include Ala380, Asn386–Tyr387, Ser405, Ala423, and Arg440.

The protein in the N-terminal section; belongs to the N-acetylglucosamine-1-phosphate uridyltransferase family. It in the C-terminal section; belongs to the transferase hexapeptide repeat family. Homotrimer. Requires Mg(2+) as cofactor.

It localises to the cytoplasm. It carries out the reaction alpha-D-glucosamine 1-phosphate + acetyl-CoA = N-acetyl-alpha-D-glucosamine 1-phosphate + CoA + H(+). The catalysed reaction is N-acetyl-alpha-D-glucosamine 1-phosphate + UTP + H(+) = UDP-N-acetyl-alpha-D-glucosamine + diphosphate. It participates in nucleotide-sugar biosynthesis; UDP-N-acetyl-alpha-D-glucosamine biosynthesis; N-acetyl-alpha-D-glucosamine 1-phosphate from alpha-D-glucosamine 6-phosphate (route II): step 2/2. Its pathway is nucleotide-sugar biosynthesis; UDP-N-acetyl-alpha-D-glucosamine biosynthesis; UDP-N-acetyl-alpha-D-glucosamine from N-acetyl-alpha-D-glucosamine 1-phosphate: step 1/1. The protein operates within bacterial outer membrane biogenesis; LPS lipid A biosynthesis. Functionally, catalyzes the last two sequential reactions in the de novo biosynthetic pathway for UDP-N-acetylglucosamine (UDP-GlcNAc). The C-terminal domain catalyzes the transfer of acetyl group from acetyl coenzyme A to glucosamine-1-phosphate (GlcN-1-P) to produce N-acetylglucosamine-1-phosphate (GlcNAc-1-P), which is converted into UDP-GlcNAc by the transfer of uridine 5-monophosphate (from uridine 5-triphosphate), a reaction catalyzed by the N-terminal domain. The protein is Bifunctional protein GlmU of Enterobacter sp. (strain 638).